The primary structure comprises 81 residues: Putative membrane protein insertion efficiency factor (81 aa).

Residues 60–81 (WNPGGYDPVPTHNTSNSSPMAE) are disordered. Polar residues predominate over residues 70-81 (THNTSNSSPMAE).

Belongs to the UPF0161 family.

It is found in the cell inner membrane. Its function is as follows. Could be involved in insertion of integral membrane proteins into the membrane. The sequence is that of Putative membrane protein insertion efficiency factor from Stutzerimonas stutzeri (strain A1501) (Pseudomonas stutzeri).